The chain runs to 314 residues: Porphobilinogen deaminase (314 aa).

C242 carries the S-(dipyrrolylmethanemethyl)cysteine modification.

This sequence belongs to the HMBS family. Monomer. It depends on dipyrromethane as a cofactor.

It catalyses the reaction 4 porphobilinogen + H2O = hydroxymethylbilane + 4 NH4(+). It functions in the pathway porphyrin-containing compound metabolism; protoporphyrin-IX biosynthesis; coproporphyrinogen-III from 5-aminolevulinate: step 2/4. Functionally, tetrapolymerization of the monopyrrole PBG into the hydroxymethylbilane pre-uroporphyrinogen in several discrete steps. The protein is Porphobilinogen deaminase (hemC) of Buchnera aphidicola subsp. Acyrthosiphon pisum (strain APS) (Acyrthosiphon pisum symbiotic bacterium).